We begin with the raw amino-acid sequence, 300 residues long: Ribosomal protein bS6--L-glutamate ligase (300 aa).

Positions 104 to 287 constitute an ATP-grasp domain; that stretch reads MQLLARQGID…IAGKMIRWIE (184 aa). Residues Lys141, 178–179, Asp187, and 211–213 contribute to the ATP site; these read EY and RSN. The Mg(2+) site is built by Asp248, Glu260, and Asn262. Positions 248, 260, and 262 each coordinate Mn(2+).

It belongs to the RimK family. Requires Mg(2+) as cofactor. Mn(2+) is required as a cofactor.

An L-glutamate ligase that catalyzes the ATP-dependent post-translational addition of glutamate residues to the C-terminus of ribosomal protein bS6 (RpsF). Is also able to catalyze the synthesis of poly-alpha-glutamate in vitro, via ATP hydrolysis from unprotected glutamate as substrate. The number of glutamate residues added to either RpsF or to poly-alpha-glutamate changes with pH. The polypeptide is Ribosomal protein bS6--L-glutamate ligase (Shigella flexneri serotype 5b (strain 8401)).